Consider the following 679-residue polypeptide: Glycine--tRNA ligase beta subunit (679 aa).

The protein belongs to the class-II aminoacyl-tRNA synthetase family. In terms of assembly, tetramer of two alpha and two beta subunits.

The protein resides in the cytoplasm. It carries out the reaction tRNA(Gly) + glycine + ATP = glycyl-tRNA(Gly) + AMP + diphosphate. In Streptococcus pyogenes serotype M6 (strain ATCC BAA-946 / MGAS10394), this protein is Glycine--tRNA ligase beta subunit.